A 142-amino-acid polypeptide reads, in one-letter code: Large ribosomal subunit protein uL11 (142 aa).

Belongs to the universal ribosomal protein uL11 family. In terms of assembly, part of the ribosomal stalk of the 50S ribosomal subunit. Interacts with L10 and the large rRNA to form the base of the stalk. L10 forms an elongated spine to which L12 dimers bind in a sequential fashion forming a multimeric L10(L12)X complex. Post-translationally, one or more lysine residues are methylated.

Functionally, forms part of the ribosomal stalk which helps the ribosome interact with GTP-bound translation factors. The sequence is that of Large ribosomal subunit protein uL11 from Pelotomaculum thermopropionicum (strain DSM 13744 / JCM 10971 / SI).